Consider the following 569-residue polypeptide: Atlastin-2 (569 aa).

Residues 1 to 49 form an N-terminal hypervariable region (HVR) region; sequence MAEGGSLRNRTRFGSRSNEAMNHVDYPDENFVEEIQLNSDTEVMEKPRP. Residues 1–464 lie on the Cytoplasmic side of the membrane; the sequence is MAEGGSLRNR…NIFYAARTPA (464 aa). The GB1/RHD3-type G domain maps to 80–324; it reads DLNVVVLSVA…LVPLLLAPEN (245 aa). Residues arginine 93, lysine 94, glycine 95, lysine 96, serine 97, phenylalanine 98, glutamine 163, arginine 232, and aspartate 233 each coordinate GDP. GTP contacts are provided by arginine 93, lysine 94, glycine 95, lysine 96, serine 97, and phenylalanine 98. Position 97 (serine 97) interacts with Mg(2+). Arginine 232 and aspartate 233 together coordinate GTP. A coiled-coil region spans residues 244–272; it reads LEGGNKFLEKRLQVKQNQHEELQNVRKHI. 2 residues coordinate GDP: valine 291 and asparagine 294. GTP is bound at residue valine 291. The segment at 362–453 is 3HB (three-helix bundle) domain; it reads MLQATAEANN…YANFLKHNDG (92 aa). Residues 454-462 form a linker region; it reads KNIFYAART. A helical membrane pass occupies residues 465–485; it reads TLFAVMFAMYIISGLTGFIGM. The Lumenal portion of the chain corresponds to 486 to 487; sequence NS. Residues 488–508 form a helical membrane-spanning segment; that stretch reads IATICNLIMGLTLLSFCTWAY. The Cytoplasmic portion of the chain corresponds to 509 to 569; it reads VKYSGEFREL…DQVSGRLKTN (61 aa). The autoinhibitory domain stretch occupies residues 535-569; the sequence is KPLSDNLMEDNIRQTVRNSIKAGLTDQVSGRLKTN.

It belongs to the TRAFAC class dynamin-like GTPase superfamily. GB1/RHD3 GTPase family. GB1 subfamily. In terms of assembly, monomeric and homodimeric. The homodimer, transiently formed by two molecules on opposing membranes, is the active form mediating ER membrane fusion.

The protein resides in the endoplasmic reticulum membrane. The catalysed reaction is GTP + H2O = GDP + phosphate + H(+). Atlastin-2 (ATL2) is a membrane-anchored GTPase that mediates the GTP-dependent fusion of endoplasmic reticulum (ER) membranes, maintaining the continuous ER network. It facilitates the formation of three-way junctions where ER tubules intersect. Two atlastin-2 on neighboring ER tubules bind GTP and form loose homodimers through the GB1/RHD3-type G domains and 3HB regions. Upon GTP hydrolysis, the 3HB regions tighten, pulling the membranes together to drive their fusion. After fusion, the homodimer disassembles upon release of inorganic phosphate (Pi). Subsequently, GDP dissociates, resetting the monomers to a conformation ready for a new fusion cycle. This is Atlastin-2 (atl2) from Xenopus laevis (African clawed frog).